Consider the following 307-residue polypeptide: Methionyl-tRNA formyltransferase (307 aa).

109–112 lines the (6S)-5,6,7,8-tetrahydrofolate pocket; that stretch reads SLLP.

This sequence belongs to the Fmt family.

The enzyme catalyses L-methionyl-tRNA(fMet) + (6R)-10-formyltetrahydrofolate = N-formyl-L-methionyl-tRNA(fMet) + (6S)-5,6,7,8-tetrahydrofolate + H(+). Functionally, attaches a formyl group to the free amino group of methionyl-tRNA(fMet). The formyl group appears to play a dual role in the initiator identity of N-formylmethionyl-tRNA by promoting its recognition by IF2 and preventing the misappropriation of this tRNA by the elongation apparatus. This Dechloromonas aromatica (strain RCB) protein is Methionyl-tRNA formyltransferase.